The sequence spans 322 residues: Transaldolase (322 aa).

Lys-132 functions as the Schiff-base intermediate with substrate in the catalytic mechanism.

It belongs to the transaldolase family. Type 1 subfamily. In terms of assembly, homodimer.

It is found in the cytoplasm. The catalysed reaction is D-sedoheptulose 7-phosphate + D-glyceraldehyde 3-phosphate = D-erythrose 4-phosphate + beta-D-fructose 6-phosphate. Its pathway is carbohydrate degradation; pentose phosphate pathway; D-glyceraldehyde 3-phosphate and beta-D-fructose 6-phosphate from D-ribose 5-phosphate and D-xylulose 5-phosphate (non-oxidative stage): step 2/3. Transaldolase is important for the balance of metabolites in the pentose-phosphate pathway. This chain is Transaldolase, found in Protochlamydia amoebophila (strain UWE25).